Consider the following 93-residue polypeptide: Early E3A 10.5 kDa glycoprotein (93 aa).

Asn-3 carries an N-linked (GlcNAc...) asparagine; by host glycan. Residues 34–55 form a helical membrane-spanning segment; that stretch reads MWWFSIALMFVCLIIMWLICCL.

It belongs to the adenoviridae E3A-1 family. Post-translationally, N-glycosylated and probably also O-glycosylated.

The protein resides in the host nucleus membrane. The sequence is that of Early E3A 10.5 kDa glycoprotein from Homo sapiens (Human).